A 317-amino-acid polypeptide reads, in one-letter code: Flagellar hook-associated protein 3 (317 aa).

The protein belongs to the bacterial flagellin family.

The protein localises to the secreted. It localises to the bacterial flagellum. This chain is Flagellar hook-associated protein 3 (flgL), found in Salmonella typhimurium (strain LT2 / SGSC1412 / ATCC 700720).